A 393-amino-acid chain; its full sequence is NAD(P)H-quinone oxidoreductase subunit H, chloroplastic (393 aa).

It belongs to the complex I 49 kDa subunit family. NDH is composed of at least 16 different subunits, 5 of which are encoded in the nucleus.

Its subcellular location is the plastid. It is found in the chloroplast thylakoid membrane. It carries out the reaction a plastoquinone + NADH + (n+1) H(+)(in) = a plastoquinol + NAD(+) + n H(+)(out). It catalyses the reaction a plastoquinone + NADPH + (n+1) H(+)(in) = a plastoquinol + NADP(+) + n H(+)(out). Its function is as follows. NDH shuttles electrons from NAD(P)H:plastoquinone, via FMN and iron-sulfur (Fe-S) centers, to quinones in the photosynthetic chain and possibly in a chloroplast respiratory chain. The immediate electron acceptor for the enzyme in this species is believed to be plastoquinone. Couples the redox reaction to proton translocation, and thus conserves the redox energy in a proton gradient. The polypeptide is NAD(P)H-quinone oxidoreductase subunit H, chloroplastic (Eucalyptus globulus subsp. globulus (Tasmanian blue gum)).